A 488-amino-acid polypeptide reads, in one-letter code: UDP-N-acetylmuramoyl-L-alanyl-D-glutamate--2,6-diaminopimelate ligase (488 aa).

UDP-N-acetyl-alpha-D-muramoyl-L-alanyl-D-glutamate is bound at residue S31. 109–115 (GTNGKTS) contributes to the ATP binding site. UDP-N-acetyl-alpha-D-muramoyl-L-alanyl-D-glutamate contacts are provided by residues N150, 151–152 (TT), S178, and R186. N6-carboxylysine is present on K218. Meso-2,6-diaminopimelate is bound by residues R384, 408 to 411 (DNPR), G458, and E462. The Meso-diaminopimelate recognition motif motif lies at 408-411 (DNPR).

It belongs to the MurCDEF family. MurE subfamily. The cofactor is Mg(2+). Carboxylation is probably crucial for Mg(2+) binding and, consequently, for the gamma-phosphate positioning of ATP.

It is found in the cytoplasm. The catalysed reaction is UDP-N-acetyl-alpha-D-muramoyl-L-alanyl-D-glutamate + meso-2,6-diaminopimelate + ATP = UDP-N-acetyl-alpha-D-muramoyl-L-alanyl-gamma-D-glutamyl-meso-2,6-diaminopimelate + ADP + phosphate + H(+). Its pathway is cell wall biogenesis; peptidoglycan biosynthesis. Its function is as follows. Catalyzes the addition of meso-diaminopimelic acid to the nucleotide precursor UDP-N-acetylmuramoyl-L-alanyl-D-glutamate (UMAG) in the biosynthesis of bacterial cell-wall peptidoglycan. The protein is UDP-N-acetylmuramoyl-L-alanyl-D-glutamate--2,6-diaminopimelate ligase of Bacillus licheniformis (strain ATCC 14580 / DSM 13 / JCM 2505 / CCUG 7422 / NBRC 12200 / NCIMB 9375 / NCTC 10341 / NRRL NRS-1264 / Gibson 46).